A 323-amino-acid polypeptide reads, in one-letter code: tRNA-dihydrouridine(16) synthase (323 aa).

FMN-binding positions include 7-9 and Gln68; that span reads PME. Cys98 acts as the Proton donor in catalysis. FMN contacts are provided by residues Lys139, 200–202, and 224–225; these read NGE and CR.

Belongs to the Dus family. DusC subfamily. Requires FMN as cofactor.

The enzyme catalyses 5,6-dihydrouridine(16) in tRNA + NADP(+) = uridine(16) in tRNA + NADPH + H(+). The catalysed reaction is 5,6-dihydrouridine(16) in tRNA + NAD(+) = uridine(16) in tRNA + NADH + H(+). In terms of biological role, catalyzes the synthesis of 5,6-dihydrouridine (D), a modified base found in the D-loop of most tRNAs, via the reduction of the C5-C6 double bond in target uridines. Specifically modifies U16 in tRNAs. The polypeptide is tRNA-dihydrouridine(16) synthase (Vibrio cholerae serotype O1 (strain ATCC 39315 / El Tor Inaba N16961)).